A 352-amino-acid chain; its full sequence is tRNA pseudouridine synthase D (352 aa).

D81 serves as the catalytic Nucleophile. Positions 157–303 (GVPNYFGLQR…MAHERRILRL (147 aa)) constitute a TRUD domain.

This sequence belongs to the pseudouridine synthase TruD family.

The enzyme catalyses uridine(13) in tRNA = pseudouridine(13) in tRNA. In terms of biological role, responsible for synthesis of pseudouridine from uracil-13 in transfer RNAs. The sequence is that of tRNA pseudouridine synthase D from Ectopseudomonas mendocina (strain ymp) (Pseudomonas mendocina).